Consider the following 388-residue polypeptide: Staphopain A (388 aa).

The N-terminal stretch at 1–25 (MKRNFPKLIALSLIFSLSVTPIANA) is a signal peptide. Positions 26 to 214 (ESNSNIKAKD…TSQFKSNNYT (189 aa)) are excised as a propeptide. Residues cysteine 238, histidine 334, and asparagine 355 contribute to the active site.

It belongs to the peptidase C47 family. In terms of assembly, in the cytoplasm, prematurely activated/folded ScpA forms a stable non-covalent complex with ScpB. In terms of processing, cleavage leads to the activation of ScpA probably by an auto-catalytic manner.

The protein resides in the secreted. It catalyses the reaction Broad endopeptidase action on proteins including elastin, but rather limited hydrolysis of small-molecule substrates. Assays are conveniently made with hemoglobin, casein or Z-Phe-Arg-NHMec as substrate.. Prematurely activated/folded staphopain A is inhibited by staphostatin A (ScpB), which is probably required to protect staphylococcal cytoplasmic proteins from degradation by ScpA. In terms of biological role, cysteine protease that plays an important role in the inhibition of host innate immune response. Cleaves host elastins found in connective tissues, pulmonary surfactant protein A in the lungs, and the chemokine receptor CXCR2 on leukocytes. Proteolytic cleavage of surfactant protein A impairs bacterial phagocytosis by neutrophils while CXCR2 degradation blocks neutrophil activation and chemotaxis. Additionally, promotes vascular leakage by activating the plasma kallikerin/kinin system, resulting in hypotension. The chain is Staphopain A (sspP) from Staphylococcus aureus (strain COL).